Here is a 193-residue protein sequence, read N- to C-terminus: Ras-like protein 2 (193 aa).

12–19 (GGGGVGKS) contributes to the GTP binding site. An Effector region motif is present at residues 34-42 (YDPTIEDSY). Residues 59 to 63 (DTAGQ) and 118 to 121 (NKCD) contribute to the GTP site. The residue at position 190 (Cys-190) is a Cysteine methyl ester. A lipid anchor (S-geranylgeranyl cysteine) is attached at Cys-190. A propeptide spans 191–193 (KLL) (removed in mature form).

Belongs to the small GTPase superfamily. Ras family.

Its subcellular location is the cell membrane. The catalysed reaction is GTP + H2O = GDP + phosphate + H(+). Its function is as follows. Ras proteins bind GDP/GTP and possess intrinsic GTPase activity. The polypeptide is Ras-like protein 2 (RAS-2) (Physarum polycephalum (Slime mold)).